The following is a 148-amino-acid chain: 3-dehydroquinate dehydratase (148 aa).

Tyr-23 functions as the Proton acceptor in the catalytic mechanism. 3 residues coordinate substrate: Asn-75, His-81, and Asp-88. His-101 acts as the Proton donor in catalysis. Substrate-binding positions include 102 to 103 (LS) and Arg-112.

Belongs to the type-II 3-dehydroquinase family. In terms of assembly, homododecamer.

The catalysed reaction is 3-dehydroquinate = 3-dehydroshikimate + H2O. Its pathway is metabolic intermediate biosynthesis; chorismate biosynthesis; chorismate from D-erythrose 4-phosphate and phosphoenolpyruvate: step 3/7. In terms of biological role, catalyzes a trans-dehydration via an enolate intermediate. In Xanthomonas oryzae pv. oryzae (strain MAFF 311018), this protein is 3-dehydroquinate dehydratase.